The primary structure comprises 434 residues: UDP-N-acetylglucosamine 1-carboxyvinyltransferase (434 aa).

Residue 22–23 coordinates phosphoenolpyruvate; the sequence is KN. Arg97 provides a ligand contact to UDP-N-acetyl-alpha-D-glucosamine. The Proton donor role is filled by Asp121. Residues Asp319 and Met341 each contribute to the UDP-N-acetyl-alpha-D-glucosamine site.

This sequence belongs to the EPSP synthase family. MurA subfamily.

It localises to the cytoplasm. It catalyses the reaction phosphoenolpyruvate + UDP-N-acetyl-alpha-D-glucosamine = UDP-N-acetyl-3-O-(1-carboxyvinyl)-alpha-D-glucosamine + phosphate. The protein operates within cell wall biogenesis; peptidoglycan biosynthesis. In terms of biological role, cell wall formation. Adds enolpyruvyl to UDP-N-acetylglucosamine. This chain is UDP-N-acetylglucosamine 1-carboxyvinyltransferase, found in Porphyromonas gingivalis (strain ATCC BAA-308 / W83).